A 293-amino-acid polypeptide reads, in one-letter code: Digeranylgeranylglyceryl phosphate synthase (293 aa).

Helical transmembrane passes span 26-46 (LMYGFGVVIGIYVSDPFFSDL), 50-70 (LLGYLTAVFLQASTFALNDYF), 107-127 (FVAAYLISPLAFIFAFAVSVL), 140-160 (FAGNVYIAFTMAAPFLFGSII), 215-235 (IASLFYLTAVSISPIPLFLLP), 237-257 (FLFDLKYAVPVSVTDVLLIYV), and 273-293 (YRKVTLVAMVLGLVGFFAGAF).

Belongs to the UbiA prenyltransferase family. DGGGP synthase subfamily. Requires Mg(2+) as cofactor.

Its subcellular location is the cell membrane. The catalysed reaction is sn-3-O-(geranylgeranyl)glycerol 1-phosphate + (2E,6E,10E)-geranylgeranyl diphosphate = 2,3-bis-O-(geranylgeranyl)-sn-glycerol 1-phosphate + diphosphate. It functions in the pathway membrane lipid metabolism; glycerophospholipid metabolism. Functionally, prenyltransferase that catalyzes the transfer of the geranylgeranyl moiety of geranylgeranyl diphosphate (GGPP) to the C2 hydroxyl of (S)-3-O-geranylgeranylglyceryl phosphate (GGGP). This reaction is the second ether-bond-formation step in the biosynthesis of archaeal membrane lipids. The chain is Digeranylgeranylglyceryl phosphate synthase from Archaeoglobus fulgidus (strain ATCC 49558 / DSM 4304 / JCM 9628 / NBRC 100126 / VC-16).